The primary structure comprises 855 residues: Valine--tRNA ligase (855 aa).

A 'HIGH' region motif is present at residues 44–54 (PNVTGVLHIGH). The 'KMSKS' region signature appears at 524 to 528 (KMSKT). Lysine 527 lines the ATP pocket. Positions 797–827 (KVEEDPARKQKEREQLEKNIANSKRQLGDEV) form a coiled coil.

This sequence belongs to the class-I aminoacyl-tRNA synthetase family. ValS type 1 subfamily. Monomer.

It is found in the cytoplasm. The catalysed reaction is tRNA(Val) + L-valine + ATP = L-valyl-tRNA(Val) + AMP + diphosphate. Functionally, catalyzes the attachment of valine to tRNA(Val). As ValRS can inadvertently accommodate and process structurally similar amino acids such as threonine, to avoid such errors, it has a 'posttransfer' editing activity that hydrolyzes mischarged Thr-tRNA(Val) in a tRNA-dependent manner. The sequence is that of Valine--tRNA ligase from Solibacter usitatus (strain Ellin6076).